A 202-amino-acid chain; its full sequence is MKALTTRQQEVYDLIRDHISSTGMPPTRAEIAMRLGFRSPNAAEEHLKALARKGVIEIISGASRGIRLLMEDEEGLPLIGRVAAGEPLLAQQHIEGHYKVDPSLFKPSADFLLRVNGMSMRDIGILDGDLLAVHKTQDVRNGQVVVARIEDEVTVKRLKKHGNVVELLPENSEFQPIVVDLRQQNFTIEGLAVGVIRNGDWV.

The H-T-H motif DNA-binding region spans 28–48; the sequence is RAEIAMRLGFRSPNAAEEHLK. Residues Ser119 and Lys156 each act as for autocatalytic cleavage activity in the active site.

Belongs to the peptidase S24 family. As to quaternary structure, homodimer.

It catalyses the reaction Hydrolysis of Ala-|-Gly bond in repressor LexA.. In terms of biological role, represses a number of genes involved in the response to DNA damage (SOS response), including recA and lexA. Binds to the 16 bp palindromic sequence 5'-CTGTATATATATACAG-3'. In the presence of single-stranded DNA, RecA interacts with LexA causing an autocatalytic cleavage which disrupts the DNA-binding part of LexA, leading to derepression of the SOS regulon and eventually DNA repair. This is LexA repressor from Serratia proteamaculans (strain 568).